The primary structure comprises 361 residues: Chorismate synthase (361 aa).

Residues arginine 48 and arginine 54 each coordinate NADP(+). FMN contacts are provided by residues 131 to 133, 243 to 244, glycine 287, 302 to 306, and arginine 328; these read RSS, NA, and KPTSS.

This sequence belongs to the chorismate synthase family. Homotetramer. It depends on FMNH2 as a cofactor.

The enzyme catalyses 5-O-(1-carboxyvinyl)-3-phosphoshikimate = chorismate + phosphate. It functions in the pathway metabolic intermediate biosynthesis; chorismate biosynthesis; chorismate from D-erythrose 4-phosphate and phosphoenolpyruvate: step 7/7. Its function is as follows. Catalyzes the anti-1,4-elimination of the C-3 phosphate and the C-6 proR hydrogen from 5-enolpyruvylshikimate-3-phosphate (EPSP) to yield chorismate, which is the branch point compound that serves as the starting substrate for the three terminal pathways of aromatic amino acid biosynthesis. This reaction introduces a second double bond into the aromatic ring system. The polypeptide is Chorismate synthase (Rhodopseudomonas palustris (strain HaA2)).